The sequence spans 684 residues: Collagen alpha-3(IX) chain (684 aa).

Positions 1–25 are cleaved as a signal peptide; that stretch reads MAGPRACAPLLLLLLLGELLAAAGA. Disordered regions lie at residues 26–521 and 548–665; these read QRVG…KEAS and LAPG…CDTS. A triple-helical region 3 (COL3) region spans residues 29 to 519; sequence GLPGPPGPPG…TGKPGVPGKE (491 aa). Composition is skewed to pro residues over residues 31 to 42 and 55 to 64; these read PGPPGPPGPPGK and PGLPGPPGPK. Residues 66 to 82 show a composition bias toward low complexity; that stretch reads APGKPGKPGEAGLPGLP. Residues 130-139 show a composition bias toward gly residues; the sequence is GPPGGIGLRG. 2 stretches are compositionally biased toward pro residues: residues 140-161 and 177-188; these read PPGP…PPGH and ICPPGPPGPPGM. Residues 200-212 are compositionally biased toward basic and acidic residues; that stretch reads EQGEVGKDGEKGD. A compositionally biased stretch (low complexity) spans 221–237; the sequence is LPGSVGLQGPRGLRGLP. Composition is skewed to basic and acidic residues over residues 264 to 282 and 344 to 356; these read AGDR…KGDL and SKGE…RAGE. The short motif at 423-425 is the Cell attachment site element; that stretch reads RGD. Asn483 is a glycosylation site (N-linked (GlcNAc...) asparagine). Positions 498–507 are enriched in low complexity; it reads LGLQGVPGVP. A nonhelical region 3 (NC3) region spans residues 520-550; it reads ASEQRIRELCGGMISEQIAQLAAHLRKPLAP. A triple-helical region 2 (COL2) region spans residues 551–630; it reads GSIGRPGPAG…QGPQGVPGTS (80 aa). Positions 558–568 are enriched in pro residues; the sequence is PAGPPGPPGPP. The span at 570–586 shows a compositional bias: low complexity; the sequence is SIGHPGARGPPGYRGPT. Positions 601 to 603 match the Cell attachment site motif; it reads RGD. A compositionally biased stretch (low complexity) spans 617–628; that stretch reads DQGPQGPQGVPG. Residues 631–632 are nonhelical region 2 (NC2); sequence KD. Residues 633 to 661 form a triple-helical region 1 (COL1) region; sequence GQDGAPGEPGPPGDPGLPGAIGAQGTPGI. The interval 662-684 is nonhelical region 1 (NC1); that stretch reads CDTSACQGAVLGGVGEKSGSRSS.

It belongs to the fibril-associated collagens with interrupted helices (FACIT) family. In terms of assembly, heterotrimer of an alpha 1(IX), an alpha 2(IX) and an alpha 3(IX) chain. Covalently linked to the telopeptides of type II collagen by lysine-derived cross-links. In terms of processing, prolines at the third position of the tripeptide repeating unit (G-X-Y) are hydroxylated in some or all of the chains.

It is found in the secreted. The protein localises to the extracellular space. The protein resides in the extracellular matrix. Functionally, structural component of hyaline cartilage and vitreous of the eye. The chain is Collagen alpha-3(IX) chain (COL9A3) from Homo sapiens (Human).